Reading from the N-terminus, the 467-residue chain is L-seryl-tRNA(Sec) selenium transferase (467 aa).

Residue Lys-298 is modified to N6-(pyridoxal phosphate)lysine.

This sequence belongs to the SelA family. The cofactor is pyridoxal 5'-phosphate.

The protein localises to the cytoplasm. It catalyses the reaction L-seryl-tRNA(Sec) + selenophosphate + H(+) = L-selenocysteinyl-tRNA(Sec) + phosphate. Its pathway is aminoacyl-tRNA biosynthesis; selenocysteinyl-tRNA(Sec) biosynthesis; selenocysteinyl-tRNA(Sec) from L-seryl-tRNA(Sec) (bacterial route): step 1/1. In terms of biological role, converts seryl-tRNA(Sec) to selenocysteinyl-tRNA(Sec) required for selenoprotein biosynthesis. This Alkaliphilus metalliredigens (strain QYMF) protein is L-seryl-tRNA(Sec) selenium transferase.